A 715-amino-acid chain; its full sequence is Fatty acid oxidation complex subunit alpha (715 aa).

Positions 1–190 (MTTTSAFMLN…KAGLVDDVVP (190 aa)) are enoyl-CoA hydratase. The segment at 306-715 (GPLNSVGILG…WTNGETDQGN (410 aa)) is 3-hydroxyacyl-CoA dehydrogenase.

The protein in the N-terminal section; belongs to the enoyl-CoA hydratase/isomerase family. In the central section; belongs to the 3-hydroxyacyl-CoA dehydrogenase family. As to quaternary structure, heterotetramer of two alpha chains (FadJ) and two beta chains (FadI).

It is found in the cytoplasm. The enzyme catalyses a (3S)-3-hydroxyacyl-CoA = a (2E)-enoyl-CoA + H2O. The catalysed reaction is a 4-saturated-(3S)-3-hydroxyacyl-CoA = a (3E)-enoyl-CoA + H2O. It catalyses the reaction a (3S)-3-hydroxyacyl-CoA + NAD(+) = a 3-oxoacyl-CoA + NADH + H(+). It carries out the reaction (3S)-3-hydroxybutanoyl-CoA = (3R)-3-hydroxybutanoyl-CoA. It participates in lipid metabolism; fatty acid beta-oxidation. Catalyzes the formation of a hydroxyacyl-CoA by addition of water on enoyl-CoA. Also exhibits 3-hydroxyacyl-CoA epimerase and 3-hydroxyacyl-CoA dehydrogenase activities. In Salmonella gallinarum (strain 287/91 / NCTC 13346), this protein is Fatty acid oxidation complex subunit alpha.